The sequence spans 37 residues: Large ribosomal subunit protein bL36c (37 aa).

It belongs to the bacterial ribosomal protein bL36 family.

Its subcellular location is the plastid. It is found in the chloroplast. The protein is Large ribosomal subunit protein bL36c of Staurastrum punctulatum (Green alga).